Here is a 39-residue protein sequence, read N- to C-terminus: Photosystem II reaction center protein L (39 aa).

Residues 18–38 (SLYLGLLLVFVTGVLFSSYFF) traverse the membrane as a helical segment.

The protein belongs to the PsbL family. PSII is composed of 1 copy each of membrane proteins PsbA, PsbB, PsbC, PsbD, PsbE, PsbF, PsbH, PsbI, PsbJ, PsbK, PsbL, PsbM, PsbT, PsbX, PsbY, PsbZ, Psb30/Ycf12, peripheral proteins PsbO, CyanoQ (PsbQ), PsbU, PsbV and a large number of cofactors. It forms dimeric complexes.

Its subcellular location is the cellular thylakoid membrane. One of the components of the core complex of photosystem II (PSII). PSII is a light-driven water:plastoquinone oxidoreductase that uses light energy to abstract electrons from H(2)O, generating O(2) and a proton gradient subsequently used for ATP formation. It consists of a core antenna complex that captures photons, and an electron transfer chain that converts photonic excitation into a charge separation. This subunit is found at the monomer-monomer interface and is required for correct PSII assembly and/or dimerization. The polypeptide is Photosystem II reaction center protein L (Synechococcus sp. (strain RCC307)).